The primary structure comprises 181 residues: CDP-diacylglycerol--glycerol-3-phosphate 3-phosphatidyltransferase (181 aa).

4 helical membrane passes run 8–28 (PNYL…AFYI), 35–55 (KLGA…GYIA), 64–84 (FGKM…IIML), and 148–168 (IIYL…LTII).

The protein belongs to the CDP-alcohol phosphatidyltransferase class-I family.

Its subcellular location is the cell membrane. It carries out the reaction a CDP-1,2-diacyl-sn-glycerol + sn-glycerol 3-phosphate = a 1,2-diacyl-sn-glycero-3-phospho-(1'-sn-glycero-3'-phosphate) + CMP + H(+). It functions in the pathway phospholipid metabolism; phosphatidylglycerol biosynthesis; phosphatidylglycerol from CDP-diacylglycerol: step 1/2. This protein catalyzes the committed step to the synthesis of the acidic phospholipids. This Rickettsia felis (strain ATCC VR-1525 / URRWXCal2) (Rickettsia azadi) protein is CDP-diacylglycerol--glycerol-3-phosphate 3-phosphatidyltransferase (pgsA).